Reading from the N-terminus, the 148-residue chain is Putative ankyrin repeat protein RF_1158 (148 aa).

The ANK repeat unit spans residues 82–115 (RPTTALGIAIAQGNSEEVIKYLLANGADPKLAFD).

The chain is Putative ankyrin repeat protein RF_1158 from Rickettsia felis (strain ATCC VR-1525 / URRWXCal2) (Rickettsia azadi).